The following is a 227-amino-acid chain: Small ribosomal subunit protein uS3 (227 aa).

The 71-residue stretch at 24 to 94 (LDEYLEEELG…RVSIEVKELP (71 aa)) folds into the KH type-2 domain. Residues 207–227 (EEVEDELKELIGKSEDEAEGA) are disordered.

The protein belongs to the universal ribosomal protein uS3 family. As to quaternary structure, part of the 30S ribosomal subunit.

In terms of biological role, binds the lower part of the 30S subunit head. The sequence is that of Small ribosomal subunit protein uS3 from Methanopyrus kandleri (strain AV19 / DSM 6324 / JCM 9639 / NBRC 100938).